A 945-amino-acid chain; its full sequence is Isoleucine--tRNA ligase (945 aa).

The short motif at 66 to 76 is the 'HIGH' region element; sequence PYANGDIHLGH. E581 is a binding site for L-isoleucyl-5'-AMP. The short motif at 622–626 is the 'KMSKS' region element; sequence KMSKS. An ATP-binding site is contributed by K625. 4 residues coordinate Zn(2+): C908, C911, C928, and C931.

It belongs to the class-I aminoacyl-tRNA synthetase family. IleS type 1 subfamily. In terms of assembly, monomer. Requires Zn(2+) as cofactor.

It is found in the cytoplasm. It catalyses the reaction tRNA(Ile) + L-isoleucine + ATP = L-isoleucyl-tRNA(Ile) + AMP + diphosphate. Catalyzes the attachment of isoleucine to tRNA(Ile). As IleRS can inadvertently accommodate and process structurally similar amino acids such as valine, to avoid such errors it has two additional distinct tRNA(Ile)-dependent editing activities. One activity is designated as 'pretransfer' editing and involves the hydrolysis of activated Val-AMP. The other activity is designated 'posttransfer' editing and involves deacylation of mischarged Val-tRNA(Ile). This is Isoleucine--tRNA ligase from Burkholderia ambifaria (strain MC40-6).